The primary structure comprises 2505 residues: Fatty acid synthase (2505 aa).

M1 bears the N-acetylmethionine mark. In terms of domain architecture, Ketosynthase family 3 (KS3) spans 1-406 (MEEVVIAGMS…GANVHVILQP (406 aa)). N6-acetyllysine is present on K59. Position 63 is a phosphoserine (S63). Residue K70 is modified to N6-acetyllysine. The active-site For beta-ketoacyl synthase activity is C161. S207 carries the post-translational modification Phosphoserine. Residue H293 is the For beta-ketoacyl synthase activity of the active site. The residue at position 298 (K298) is an N6-acetyllysine. H331 acts as the For beta-ketoacyl synthase activity in catalysis. The acyl and malonyl transferases stretch occupies residues 429–817 (RTMEAVQGLL…IDINPNALFP (389 aa)). Residue K528 is modified to N6-acetyllysine. The For malonyltransferase activity role is filled by S581. An acyl-CoA contacts are provided by residues 647–648 (DT) and F671. At K673 the chain carries N6-acetyllysine. A Phosphoserine modification is found at S725. Residue R773 participates in an acyl-CoA binding. K790 carries the N6-acetyllysine modification. The segment at 844–966 (IPVAEDFPNG…KVYQWEDPDS (123 aa)) is N-terminal hotdog fold. The PKS/mFAS DH domain occupies 844–1112 (IPVAEDFPNG…TSRRQQEQLV (269 aa)). H878 serves as the catalytic Proton acceptor; for dehydratase activity. A C-terminal hotdog fold region spans residues 983-1112 (VSRLTQGEVY…TSRRQQEQLV (130 aa)). Position 993 is an N6-acetyllysine (K993). Residue D1032 is the Proton donor; for dehydratase activity of the active site. Residue K1276 is modified to N6-acetyllysine. The residue at position 1464 (C1464) is an S-nitrosocysteine. S1578 and S1588 each carry phosphoserine. An enoyl reductase region spans residues 1629–1857 (DVPSSWTLEE…VQVREEEPEA (229 aa)). 1665–1682 (VLIHSGSGGVGQAAISIA) is an NADP(+) binding site. K1698 carries the post-translational modification N6-(pyridoxal phosphate)lysine; alternate. Residue K1698 is modified to N6-acetyllysine; alternate. K1765, K1841, and K1989 each carry N6-acetyllysine. Position 1765–1780 (1765–1780 (KFDLSNNHPLGMAIFL)) interacts with NADP(+). Positions 1858 to 2113 (MLPGAQPTLI…VLAEKKAVAH (256 aa)) are beta-ketoacyl reductase. An S-nitrosocysteine modification is found at C2085. The Carrier domain occupies 2113–2193 (HGDGEAQRDL…EMSSKAGSDT (81 aa)). At S2151 the chain carries O-(pantetheine 4'-phosphoryl)serine; alternate. Residue S2151 is modified to Phosphoserine; alternate. S2191 and S2230 each carry phosphoserine. A thioesterase region spans residues 2202–2505 (NDTSLKQAQL…AEPRVSVREG (304 aa)). S2302 functions as the For thioesterase activity in the catalytic mechanism. At K2385 the chain carries N6-acetyllysine. K2443 is covalently cross-linked (Glycyl lysine isopeptide (Lys-Gly) (interchain with G-Cter in SUMO2)). H2475 functions as the For thioesterase activity in the catalytic mechanism.

As to quaternary structure, homodimer which is arranged in a head to tail fashion. Interacts with CEACAM1; this interaction is insulin and phosphorylation-dependent; reduces fatty-acid synthase activity. S-nitrosylation of Fatty acid synthase at cysteine residues Cys-1464 or Cys-2085 is important for the enzyme dimerization. In adipocytes, S-nitrosylation of Fatty acid synthase occurs under physiological conditions and gradually increases during adipogenesis.

The protein resides in the cytoplasm. Its subcellular location is the melanosome. The enzyme catalyses acetyl-CoA + n malonyl-CoA + 2n NADPH + 2n H(+) = a long-chain fatty acid + (n+1) CoA + n CO2 + 2n NADP(+).. It carries out the reaction holo-[ACP] + acetyl-CoA = acetyl-[ACP] + CoA. It catalyses the reaction holo-[ACP] + malonyl-CoA = malonyl-[ACP] + CoA. The catalysed reaction is a fatty acyl-[ACP] + malonyl-[ACP] + H(+) = a 3-oxoacyl-[ACP] + holo-[ACP] + CO2. The enzyme catalyses a (3R)-hydroxyacyl-[ACP] + NADP(+) = a 3-oxoacyl-[ACP] + NADPH + H(+). It carries out the reaction a (3R)-hydroxyacyl-[ACP] = a (2E)-enoyl-[ACP] + H2O. It catalyses the reaction a 2,3-saturated acyl-[ACP] + NADP(+) = a (2E)-enoyl-[ACP] + NADPH + H(+). The catalysed reaction is hexadecanoyl-[ACP] + H2O = hexadecanoate + holo-[ACP] + H(+). The enzyme catalyses acetyl-[ACP] + malonyl-[ACP] + H(+) = 3-oxobutanoyl-[ACP] + holo-[ACP] + CO2. It carries out the reaction 3-oxobutanoyl-[ACP] + NADPH + H(+) = (3R)-hydroxybutanoyl-[ACP] + NADP(+). It catalyses the reaction (3R)-hydroxybutanoyl-[ACP] = (2E)-butenoyl-[ACP] + H2O. The catalysed reaction is (2E)-butenoyl-[ACP] + NADPH + H(+) = butanoyl-[ACP] + NADP(+). The enzyme catalyses butanoyl-[ACP] + malonyl-[ACP] + H(+) = 3-oxohexanoyl-[ACP] + holo-[ACP] + CO2. It carries out the reaction 3-oxohexanoyl-[ACP] + NADPH + H(+) = (3R)-hydroxyhexanoyl-[ACP] + NADP(+). It catalyses the reaction (3R)-hydroxyhexanoyl-[ACP] = (2E)-hexenoyl-[ACP] + H2O. The catalysed reaction is (2E)-hexenoyl-[ACP] + NADPH + H(+) = hexanoyl-[ACP] + NADP(+). The enzyme catalyses hexanoyl-[ACP] + malonyl-[ACP] + H(+) = 3-oxooctanoyl-[ACP] + holo-[ACP] + CO2. It carries out the reaction 3-oxooctanoyl-[ACP] + NADPH + H(+) = (3R)-hydroxyoctanoyl-[ACP] + NADP(+). It catalyses the reaction (3R)-hydroxyoctanoyl-[ACP] = (2E)-octenoyl-[ACP] + H2O. The catalysed reaction is (2E)-octenoyl-[ACP] + NADPH + H(+) = octanoyl-[ACP] + NADP(+). The enzyme catalyses octanoyl-[ACP] + malonyl-[ACP] + H(+) = 3-oxodecanoyl-[ACP] + holo-[ACP] + CO2. It carries out the reaction 3-oxodecanoyl-[ACP] + NADPH + H(+) = (3R)-hydroxydecanoyl-[ACP] + NADP(+). It catalyses the reaction (3R)-hydroxydecanoyl-[ACP] = (2E)-decenoyl-[ACP] + H2O. The catalysed reaction is (2E)-decenoyl-[ACP] + NADPH + H(+) = decanoyl-[ACP] + NADP(+). The enzyme catalyses decanoyl-[ACP] + malonyl-[ACP] + H(+) = 3-oxododecanoyl-[ACP] + holo-[ACP] + CO2. It carries out the reaction 3-oxododecanoyl-[ACP] + NADPH + H(+) = (3R)-hydroxydodecanoyl-[ACP] + NADP(+). It catalyses the reaction (3R)-hydroxydodecanoyl-[ACP] = (2E)-dodecenoyl-[ACP] + H2O. The catalysed reaction is (2E)-dodecenoyl-[ACP] + NADPH + H(+) = dodecanoyl-[ACP] + NADP(+). The enzyme catalyses dodecanoyl-[ACP] + malonyl-[ACP] + H(+) = 3-oxotetradecanoyl-[ACP] + holo-[ACP] + CO2. It carries out the reaction 3-oxotetradecanoyl-[ACP] + NADPH + H(+) = (3R)-hydroxytetradecanoyl-[ACP] + NADP(+). It catalyses the reaction (3R)-hydroxytetradecanoyl-[ACP] = (2E)-tetradecenoyl-[ACP] + H2O. The catalysed reaction is (2E)-tetradecenoyl-[ACP] + NADPH + H(+) = tetradecanoyl-[ACP] + NADP(+). The enzyme catalyses tetradecanoyl-[ACP] + malonyl-[ACP] + H(+) = 3-oxohexadecanoyl-[ACP] + holo-[ACP] + CO2. It carries out the reaction 3-oxohexadecanoyl-[ACP] + NADPH + H(+) = (3R)-hydroxyhexadecanoyl-[ACP] + NADP(+). It catalyses the reaction (3R)-hydroxyhexadecanoyl-[ACP] = (2E)-hexadecenoyl-[ACP] + H2O. The catalysed reaction is (2E)-hexadecenoyl-[ACP] + NADPH + H(+) = hexadecanoyl-[ACP] + NADP(+). The enzyme catalyses hexadecanoyl-[ACP] + malonyl-[ACP] + H(+) = 3-oxooctadecanoyl-[ACP] + holo-[ACP] + CO2. It carries out the reaction 3-oxooctadecanoyl-[ACP] + NADPH + H(+) = (3R)-hydroxyoctadecanoyl-[ACP] + NADP(+). It catalyses the reaction (3R)-hydroxyoctadecanoyl-[ACP] = (2E)-octadecenoyl-[ACP] + H2O. The catalysed reaction is (2E)-octadecenoyl-[ACP] + NADPH + H(+) = octadecanoyl-[ACP] + NADP(+). The enzyme catalyses tetradecanoyl-[ACP] + H2O = tetradecanoate + holo-[ACP] + H(+). It carries out the reaction octadecanoyl-[ACP] + H2O = octadecanoate + holo-[ACP] + H(+). The protein operates within lipid metabolism; fatty acid biosynthesis. Cerulenin, a potent non-competitive pharmacological inhibitor of FAS, binds covalently to the active site of the condensing enzyme region, inactivating a key enzyme step in fatty acid synthesis. Another inhibitor, though less efficient, is C75, a member of the alpha-methylene-gamma-butyrolactone chemical class, also proposed as an antitumour and anti-obesity agent. Its function is as follows. Fatty acid synthetase is a multifunctional enzyme that catalyzes the de novo biosynthesis of long-chain saturated fatty acids starting from acetyl-CoA and malonyl-CoA in the presence of NADPH. This multifunctional protein contains 7 catalytic activities and a site for the binding of the prosthetic group 4'-phosphopantetheine of the acyl carrier protein ([ACP]) domain. The polypeptide is Fatty acid synthase (Fasn) (Rattus norvegicus (Rat)).